A 309-amino-acid chain; its full sequence is Dioxygenase af480 (309 aa).

Residues histidine 153, aspartate 155, and histidine 228 each contribute to the Fe cation site.

It belongs to the PhyH family. The cofactor is Fe cation.

It carries out the reaction 5-dehydro-6-demethoxyfumagillol + 2-oxoglutarate + O2 = 5-dehydro-6-demethoxy-6-hydroxyfumagillol + succinate + CO2. It participates in secondary metabolite biosynthesis; terpenoid biosynthesis. In terms of biological role, dioxygenase; part of the gene cluster that mediates the biosynthesis of fumagillin, a meroterpenoid that has numerous biological activities including irreversible inhibition of human type 2 methionine aminopeptidase (METAP2). Within the pathway, the dioxygenase af480 acts as a 5-dehydro-6-demethoxyfumagillol dioxygenase that hydroylates 5-keto-demethoxyfumagillol at position C-6. The pathway begins with the conversion of farnesyl pyrophosphate (FPP) to beta-trans-bergamotene by the membrane-bound beta-trans-bergamotene synthase af520. The multifunctional cytochrome P450 monooxygenase af510 then converts beta-trans-bergamotene into 5-keto-demethoxyfumagillol via several oxydation steps. 5-keto-demethoxyfumagillol is then subjected to successive C-6 hydroxylation and O-methylation by the dioxygenase af480 and O-methyltransferase af390-400, respectively, to yield 5-keto-fumagillol, which is then stereoselectively reduced by the keto-reductase af490 to 5R-hydroxy-seco-sesquiterpene. The next step is the polyketide transferase af380-catalyzed transfer of a dodecapentaenoyl group synthesized by the polyketide synthase af370 onto 5R-hydroxy-seco-sesquiterpene which leads to the production of prefumagillin. Finally, oxidative cleavage by the monooxygenase af470 converts prefumagillin to fumagillin. In Aspergillus fumigatus (strain ATCC MYA-4609 / CBS 101355 / FGSC A1100 / Af293) (Neosartorya fumigata), this protein is Dioxygenase af480.